The primary structure comprises 388 residues: Alanine racemase 3 (388 aa).

Residue K41 is the Proton acceptor; specific for D-alanine of the active site. At K41 the chain carries N6-(pyridoxal phosphate)lysine. Substrate is bound at residue R135. Y256 (proton acceptor; specific for L-alanine) is an active-site residue. M304 is a substrate binding site.

The protein belongs to the alanine racemase family. The cofactor is pyridoxal 5'-phosphate.

The enzyme catalyses L-alanine = D-alanine. Its pathway is amino-acid biosynthesis; D-alanine biosynthesis; D-alanine from L-alanine: step 1/1. Its function is as follows. Catalyzes the interconversion of L-alanine and D-alanine. May also act on other amino acids. The polypeptide is Alanine racemase 3 (alr3) (Mesorhizobium japonicum (strain LMG 29417 / CECT 9101 / MAFF 303099) (Mesorhizobium loti (strain MAFF 303099))).